A 118-amino-acid polypeptide reads, in one-letter code: Large ribosomal subunit protein uL22 (118 aa).

This sequence belongs to the universal ribosomal protein uL22 family. Part of the 50S ribosomal subunit.

In terms of biological role, this protein binds specifically to 23S rRNA; its binding is stimulated by other ribosomal proteins, e.g. L4, L17, and L20. It is important during the early stages of 50S assembly. It makes multiple contacts with different domains of the 23S rRNA in the assembled 50S subunit and ribosome. The globular domain of the protein is located near the polypeptide exit tunnel on the outside of the subunit, while an extended beta-hairpin is found that lines the wall of the exit tunnel in the center of the 70S ribosome. In Treponema denticola (strain ATCC 35405 / DSM 14222 / CIP 103919 / JCM 8153 / KCTC 15104), this protein is Large ribosomal subunit protein uL22.